We begin with the raw amino-acid sequence, 130 residues long: Small ribosomal subunit protein uS11 (130 aa).

Belongs to the universal ribosomal protein uS11 family. In terms of assembly, part of the 30S ribosomal subunit. Interacts with proteins S7 and S18. Binds to IF-3.

Located on the platform of the 30S subunit, it bridges several disparate RNA helices of the 16S rRNA. Forms part of the Shine-Dalgarno cleft in the 70S ribosome. This Shewanella amazonensis (strain ATCC BAA-1098 / SB2B) protein is Small ribosomal subunit protein uS11.